Consider the following 276-residue polypeptide: MATNIGMMDSAYFVGRNEILTWINDRLHLNLSRVEEAASGAVQCQMLDMTFPGVVPMHKVNFDAKNEYDMIQNYKVLQDVFNKLKITKPLEINRLVKGRPLDNLEFLQWLKRFCDSINGGIMNENYNPVERRSRNGKERSVKGSNKIPKSLQTNNNHPPPNSSSVGLSKASGPKSAKAAEVQALSKELVDLKISTDLLEKERDFYFSKLRDVEILCQTPELDDLPIVVAVKKILYATDANESALEDAQEYLNQSLGVEDDEAEGNGEQLEEEKTQA.

A Calponin-homology (CH) domain is found at 13–115 (FVGRNEILTW…FLQWLKRFCD (103 aa)). Positions 124 to 172 (ENYNPVERRSRNGKERSVKGSNKIPKSLQTNNNHPPPNSSSVGLSKASG) are disordered. Over residues 129 to 141 (VERRSRNGKERSV) the composition is skewed to basic and acidic residues. The segment covering 162 to 172 (SSSVGLSKASG) has biased composition (low complexity). The region spanning 173-243 (PKSAKAAEVQ…LYATDANESA (71 aa)) is the EB1 C-terminal domain. Residues 252–276 (NQSLGVEDDEAEGNGEQLEEEKTQA) form a disordered region. The segment covering 257–270 (VEDDEAEGNGEQLE) has biased composition (acidic residues).

Belongs to the MAPRE family. Homodimer and heterodimer with EB1B. Interacts with tobamovirus movement protein. In terms of tissue distribution, highly expressed in guard cells of leaf stomata, pollen grains and pollen tubes. Expressed in young roots.

Its subcellular location is the cytoplasm. The protein localises to the cytoskeleton. The protein resides in the spindle pole. It localises to the phragmoplast. In terms of biological role, binds to the plus end of microtubules and regulates the dynamics of the microtubule cytoskeleton. May be involved in anchoring microtubules to their nucleation sites and/or functioning as a reservoir for distribution to the growing end. In plants, microtubule minus ends are not necessarily severed from the nucleation site and transported to the plus end of a microtubule as part of the recycling process. May play a role in endomembrane organization during polarized growth of plant cells. Interacts with the tobamovirus movement protein (MP) and may play a role in the association of MP with the microtubule system during infection. The sequence is that of Microtubule-associated protein RP/EB family member 1A (EB1A) from Arabidopsis thaliana (Mouse-ear cress).